The following is a 1057-amino-acid chain: Structural maintenance of chromosomes protein 6B (1057 aa).

Positions 22–1047 (ILRIKVENFM…ISMVKSHERI (1026 aa)) constitute a Zinc-hook domain. Position 49–56 (49–56 (GQNGSGKS)) interacts with ATP. Positions 135 to 448 (KVSNKRDELR…NDLKKHQTNK (314 aa)) form a coiled coil. The segment at 449–632 (VTAFGGDRVI…PPLSRRPSRL (184 aa)) is flexible hinge. The stretch at 633–904 (CASFDDQIKD…QDHREKLMAC (272 aa)) forms a coiled coil. The span at 818-828 (KNKRKESDQKA) shows a compositional bias: basic and acidic residues. A disordered region spans residues 818–845 (KNKRKESDQKASEICPESEIESLGPWDG).

The protein belongs to the SMC family. SMC6 subfamily. Forms a heterodimer with SMC5. The SMC5-SMC6 complex is composed of the SMC5 and SMC6 heterodimer attached via their hinge domain and from the non-SMC subunit NSE4A or NSE4B. As to expression, expressed in seedlings, rosette leaves and floral buds.

Its subcellular location is the nucleus. It is found in the chromosome. In terms of biological role, core component of the SMC5-SMC6 complex that promotes sister chromatid alignment after DNA damage and facilitates double-stranded DNA breaks (DSBs) repair via homologous recombination between sister chromatids. In Arabidopsis thaliana (Mouse-ear cress), this protein is Structural maintenance of chromosomes protein 6B (SMC6B).